Consider the following 253-residue polypeptide: MLNKRVIPCLDVNNGRVVKGTSFVNLRDAGDPVELAARYYREGADELVFLDISATTEERKTMAEVVEKVSKEVFIPLCVGGGLRSIADMTTLLRAGADKVSVNSAAVSDPDLISRGAEKFGRQCIVVAIDAKREGNSWQVYTHSGKKPTGLDAVEWAMKAEQLGAGEILLTSIDADGKNTGYDNELNREVGSRLNIPVIASGGAGSPEDLYNALDKGQADAVLAASIFHYGRYSIAEVKKYLKSKGLPVRLEN.

Active-site residues include Asp-11 and Asp-130.

It belongs to the HisA/HisF family. As to quaternary structure, heterodimer of HisH and HisF.

It localises to the cytoplasm. The catalysed reaction is 5-[(5-phospho-1-deoxy-D-ribulos-1-ylimino)methylamino]-1-(5-phospho-beta-D-ribosyl)imidazole-4-carboxamide + L-glutamine = D-erythro-1-(imidazol-4-yl)glycerol 3-phosphate + 5-amino-1-(5-phospho-beta-D-ribosyl)imidazole-4-carboxamide + L-glutamate + H(+). Its pathway is amino-acid biosynthesis; L-histidine biosynthesis; L-histidine from 5-phospho-alpha-D-ribose 1-diphosphate: step 5/9. In terms of biological role, IGPS catalyzes the conversion of PRFAR and glutamine to IGP, AICAR and glutamate. The HisF subunit catalyzes the cyclization activity that produces IGP and AICAR from PRFAR using the ammonia provided by the HisH subunit. This chain is Imidazole glycerol phosphate synthase subunit HisF, found in Dehalococcoides mccartyi (strain CBDB1).